The sequence spans 382 residues: Transcription factor MYB104 (382 aa).

HTH myb-type domains follow at residues 13-69 (KKTF…KPSL) and 70-120 (KKGP…MRLK). 2 DNA-binding regions (H-T-H motif) span residues 41 to 65 (WTHV…MNHL) and 93 to 116 (WSQM…NARR). A disordered region spans residues 326 to 364 (IPKTDTSSESQLFQSSLRSHTDATPDIANTTGYVGSNER). Polar residues-rich tracts occupy residues 329–343 (TDTS…SSLR) and 352–364 (IANT…SNER).

It is found in the nucleus. This is Transcription factor MYB104 (MYB104) from Arabidopsis thaliana (Mouse-ear cress).